We begin with the raw amino-acid sequence, 494 residues long: Guanosine-5'-triphosphate,3'-diphosphate pyrophosphatase (494 aa).

The protein belongs to the GppA/Ppx family. GppA subfamily.

It catalyses the reaction guanosine 3'-diphosphate 5'-triphosphate + H2O = guanosine 3',5'-bis(diphosphate) + phosphate + H(+). Its pathway is purine metabolism; ppGpp biosynthesis; ppGpp from GTP: step 2/2. Catalyzes the conversion of pppGpp to ppGpp. Guanosine pentaphosphate (pppGpp) is a cytoplasmic signaling molecule which together with ppGpp controls the 'stringent response', an adaptive process that allows bacteria to respond to amino acid starvation, resulting in the coordinated regulation of numerous cellular activities. The polypeptide is Guanosine-5'-triphosphate,3'-diphosphate pyrophosphatase (Erwinia tasmaniensis (strain DSM 17950 / CFBP 7177 / CIP 109463 / NCPPB 4357 / Et1/99)).